The sequence spans 785 residues: Endonuclease MutS2 (785 aa).

Residue 335–342 (GPNTGGKT) coordinates ATP. Residues 710-785 (LDLRGERYEE…GLGNTVVELR (76 aa)) form the Smr domain. A disordered region spans residues 764 to 785 (VKSARDGGANEGGLGNTVVELR).

It belongs to the DNA mismatch repair MutS family. MutS2 subfamily. In terms of assembly, homodimer. Binds to stalled ribosomes, contacting rRNA.

Functionally, endonuclease that is involved in the suppression of homologous recombination and thus may have a key role in the control of bacterial genetic diversity. Acts as a ribosome collision sensor, splitting the ribosome into its 2 subunits. Detects stalled/collided 70S ribosomes which it binds and splits by an ATP-hydrolysis driven conformational change. Acts upstream of the ribosome quality control system (RQC), a ribosome-associated complex that mediates the extraction of incompletely synthesized nascent chains from stalled ribosomes and their subsequent degradation. Probably generates substrates for RQC. This Halalkalibacterium halodurans (strain ATCC BAA-125 / DSM 18197 / FERM 7344 / JCM 9153 / C-125) (Bacillus halodurans) protein is Endonuclease MutS2.